We begin with the raw amino-acid sequence, 394 residues long: Elongation factor Tu (394 aa).

Positions 10-205 (KPHVNIGTIG…VDTWIPLPPR (196 aa)) constitute a tr-type G domain. A G1 region spans residues 19 to 26 (GHVDHGKT). 19-26 (GHVDHGKT) lines the GTP pocket. Threonine 26 lines the Mg(2+) pocket. Residues 60 to 64 (GITIN) are G2. The tract at residues 81–84 (DCPG) is G3. GTP is bound by residues 81 to 85 (DCPGH) and 136 to 139 (NKCD). The G4 stretch occupies residues 136 to 139 (NKCD). Positions 174 to 176 (SAL) are G5.

The protein belongs to the TRAFAC class translation factor GTPase superfamily. Classic translation factor GTPase family. EF-Tu/EF-1A subfamily. In terms of assembly, monomer.

The protein resides in the cytoplasm. It carries out the reaction GTP + H2O = GDP + phosphate + H(+). In terms of biological role, GTP hydrolase that promotes the GTP-dependent binding of aminoacyl-tRNA to the A-site of ribosomes during protein biosynthesis. This Bacteroides fragilis (strain ATCC 25285 / DSM 2151 / CCUG 4856 / JCM 11019 / LMG 10263 / NCTC 9343 / Onslow / VPI 2553 / EN-2) protein is Elongation factor Tu.